A 138-amino-acid polypeptide reads, in one-letter code: MAKPILRIGSRKNTRSGSRKNVRRIPKGIIHVQASFNNTIVTVTDVRGRVISWSSAGTCGFRGTRRGTPFAAQTAAGNAIRAVVDQGMQRAEVRIKGPGLGRDAALRAIRRSGILLSFVRDVTPMPHNGCRPPKKRRV.

The tract at residues 1–22 is disordered; that stretch reads MAKPILRIGSRKNTRSGSRKNV. The segment covering 9–22 has biased composition (basic residues); the sequence is GSRKNTRSGSRKNV.

The protein belongs to the universal ribosomal protein uS11 family. In terms of assembly, part of the 30S ribosomal subunit.

It localises to the plastid. It is found in the chloroplast. In Arabis hirsuta (Hairy rock-cress), this protein is Small ribosomal subunit protein uS11c.